Here is a 548-residue protein sequence, read N- to C-terminus: Copine-2 (548 aa).

C2 domains lie at 6–131 and 138–263; these read DGGA…TRPL and PAGK…PLEI. The Ca(2+) site is built by D39, D45, D97, D99, S102, D109, D170, D176, D232, D234, and D240. Residues 247–304 form a linker region region; the sequence is TSVLQMSEARDGVPLEIECINPKKQRKKKSYKNSGIIILRSCKIHRNYSFLDYILGGC. The 203-residue stretch at 305–507 folds into the VWFA domain; that stretch reads QLMFTVGIDF…AARDIVQFVP (203 aa).

This sequence belongs to the copine family. The cofactor is Ca(2+).

It localises to the cytoplasm. Its subcellular location is the nucleus. It is found in the cell membrane. Calcium-dependent phospholipid-binding protein that plays a role in calcium-mediated intracellular processes. Exhibits calcium-dependent cell membrane binding properties. The chain is Copine-2 from Mus musculus (Mouse).